A 273-amino-acid polypeptide reads, in one-letter code: Eukaryotic translation initiation factor 3 subunit J (273 aa).

Positions 1–158 (MPTKKWEDEE…DPSDPSKTVE (158 aa)) are disordered. The segment covering 34–54 (DEEANDSDVLDSWDAAEDSEV) has biased composition (acidic residues). Residues 50 to 97 (EDSEVEREKAKKAAEAKAKAEAEAKANKKTKAARINEHKQRRKEAEES) are a coiled coil. Positions 55–75 (EREKAKKAAEAKAKAEAEAKA) are enriched in basic and acidic residues. Over residues 95-104 (EESDESDDET) the composition is skewed to acidic residues. Over residues 105–126 (ESQRRERLRRTEKEADLAHAED) the composition is skewed to basic and acidic residues.

Belongs to the eIF-3 subunit J family. As to quaternary structure, component of the eukaryotic translation initiation factor 3 (eIF-3) complex.

It is found in the cytoplasm. Its function is as follows. Component of the eukaryotic translation initiation factor 3 (eIF-3) complex, which is involved in protein synthesis of a specialized repertoire of mRNAs and, together with other initiation factors, stimulates binding of mRNA and methionyl-tRNAi to the 40S ribosome. The eIF-3 complex specifically targets and initiates translation of a subset of mRNAs involved in cell proliferation. The protein is Eukaryotic translation initiation factor 3 subunit J of Pyricularia oryzae (strain 70-15 / ATCC MYA-4617 / FGSC 8958) (Rice blast fungus).